The chain runs to 509 residues: Dihydrolipoyl dehydrogenase, mitochondrial (509 aa).

The transit peptide at 1 to 35 (MQSWSRVYCSLVKRGHFSRISHGLQGVSVVPLRTY) directs the protein to the mitochondrion. Lys-66 is modified (N6-acetyllysine; alternate). The residue at position 66 (Lys-66) is an N6-succinyllysine; alternate. FAD is bound by residues 71–80 (EKNETLGGTC) and Lys-89. Cys-80 and Cys-85 form a disulfide bridge. An N6-acetyllysine; alternate mark is found at Lys-104, Lys-122, Lys-132, and Lys-143. 4 positions are modified to N6-succinyllysine; alternate: Lys-104, Lys-122, Lys-132, and Lys-143. Gly-154 is an FAD binding site. Residues Lys-159 and Lys-166 each carry the N6-succinyllysine modification. 183-185 (TGS) serves as a coordination point for FAD. NAD(+) is bound by residues 220–227 (GAGVIGVE) and Glu-243. N6-succinyllysine is present on residues Lys-273 and Lys-277. Position 278 (Val-278) interacts with NAD(+). 2 positions are modified to phosphoserine: Ser-285 and Ser-297. Gly-314 provides a ligand contact to NAD(+). Lys-346 is subject to N6-acetyllysine. Residues Asp-355 and 361 to 364 (MLAH) each bind FAD. Position 410 is an N6-acetyllysine; alternate (Lys-410). Lys-410 carries the post-translational modification N6-succinyllysine; alternate. Lys-417 and Lys-420 each carry N6-acetyllysine. Residue Lys-430 is modified to N6-succinyllysine. Catalysis depends on His-487, which acts as the Proton acceptor. An N6-acetyllysine; alternate modification is found at Lys-505. Lys-505 carries the post-translational modification N6-succinyllysine; alternate.

It belongs to the class-I pyridine nucleotide-disulfide oxidoreductase family. Homodimer. Part of the multimeric pyruvate dehydrogenase complex that contains multiple copies of pyruvate dehydrogenase (subunits PDHA (PDHA1 or PDHA2) and PDHB, E1), dihydrolipoamide acetyltransferase (DLAT, E2) and lipoamide dehydrogenase (DLD, E3). These subunits are bound to an inner core composed of about 48 DLAT and 12 PDHX molecules (by non covalent bonds). The 2-oxoglutarate dehydrogenase complex is composed of OGDH (2-oxoglutarate dehydrogenase; E1), DLST (dihydrolipoamide succinyltransferase; E2), DLD (dihydrolipoamide dehydrogenase; E3) and the assembly factor KGD4. It contains multiple copies of the three enzymatic components (E1, E2 and E3). In the nucleus, the 2-oxoglutarate dehydrogenase complex associates with KAT2A. Interacts with PDHX. The cofactor is FAD. Tyrosine phosphorylated.

The protein resides in the mitochondrion matrix. Its subcellular location is the nucleus. The protein localises to the cell projection. It localises to the cilium. It is found in the flagellum. The protein resides in the cytoplasmic vesicle. Its subcellular location is the secretory vesicle. The protein localises to the acrosome. The catalysed reaction is N(6)-[(R)-dihydrolipoyl]-L-lysyl-[protein] + NAD(+) = N(6)-[(R)-lipoyl]-L-lysyl-[protein] + NADH + H(+). Its function is as follows. Lipoamide dehydrogenase is a component of the glycine cleavage system as well as an E3 component of three alpha-ketoacid dehydrogenase complexes (pyruvate-, alpha-ketoglutarate-, and branched-chain amino acid-dehydrogenase complex). The 2-oxoglutarate dehydrogenase complex is mainly active in the mitochondrion. A fraction of the 2-oxoglutarate dehydrogenase complex also localizes in the nucleus and is required for lysine succinylation of histones: associates with KAT2A on chromatin and provides succinyl-CoA to histone succinyltransferase KAT2A. In monomeric form may have additional moonlighting function as serine protease. Involved in the hyperactivation of spermatazoa during capacitation and in the spermatazoal acrosome reaction. The polypeptide is Dihydrolipoyl dehydrogenase, mitochondrial (DLD) (Bos taurus (Bovine)).